A 275-amino-acid polypeptide reads, in one-letter code: Methylesterase 10 (275 aa).

S96 (acyl-ester intermediate) is an active-site residue. Residues D225 and H253 each act as charge relay system in the active site.

The protein belongs to the AB hydrolase superfamily. Methylesterase family.

It catalyses the reaction methyl (-)-jasmonate + H2O = jasmonate + methanol + H(+). It participates in plant hormone biosynthesis. It functions in the pathway lipid metabolism; oxylipin biosynthesis. Methylesterase shown to have methyl jasmonate (MeJA) esterase activity in vitro. The sequence is that of Methylesterase 10 from Arabidopsis thaliana (Mouse-ear cress).